A 270-amino-acid chain; its full sequence is Interleukin-1 alpha (270 aa).

Positions 1–112 (MAKVPDLFED…EVEEEIMKPR (112 aa)) are excised as a propeptide. Position 82 is an N6-acetyllysine (Lys82). A nuclear localization signal (NLS) region spans residues 82 to 86 (KKRRL). Ser87 carries the phosphoserine modification. Asn139 is a glycosylation site (N-linked (GlcNAc...) asparagine).

Belongs to the IL-1 family. In terms of assembly, monomer. Interacts with TMED10; the interaction mediates the translocation from the cytoplasm into the ERGIC (endoplasmic reticulum-Golgi intermediate compartment) and thereby secretion. Interacts with IL1R1. Interacts with S100A13; this interaction is the first step in the export of IL1A, followed by direct translocation of this complex across the plasma membrane. In terms of processing, acetylated within its nuclear localization sequence, which impacts subcellular localization. Proteolytic processed by CAPN1 in a calcium-dependent manner. Cleavage from 31 kDa precursor to 18 kDa biologically active molecules. Post-translationally, phosphorylated. Phosphorylation greatly enhances susceptibility to digestion and promotes the conversion of pre-IL1A alpha to the biologically active IL1A.

The protein localises to the nucleus. Its subcellular location is the cytoplasm. It is found in the secreted. Functionally, cytokine constitutively present intracellularly in nearly all resting non-hematopoietic cells that plays an important role in inflammation and bridges the innate and adaptive immune systems. After binding to its receptor IL1R1 together with its accessory protein IL1RAP, forms the high affinity interleukin-1 receptor complex. Signaling involves the recruitment of adapter molecules such as MYD88, IRAK1 or IRAK4. In turn, mediates the activation of NF-kappa-B and the three MAPK pathways p38, p42/p44 and JNK pathways. Within the cell, acts as an alarmin and cell death results in its liberation in the extracellular space after disruption of the cell membrane to induce inflammation and alert the host to injury or damage. In addition to its role as a danger signal, which occurs when the cytokine is passively released by cell necrosis, directly senses DNA damage and acts as signal for genotoxic stress without loss of cell integrity. The chain is Interleukin-1 alpha (IL1A) from Felis catus (Cat).